The chain runs to 669 residues: MPGMVLFGRRWSLASDDLVFPGSFELFLRVLWWIVSLTLYLTHRRRLDCPGGVLLSTYLIVLLVLLAVIICTVLAIVCVSMRGTICNPGPRKSMSKLLYIRLALFLPEMVWASLGAAWVAKGIQCDRTVVIGIIATVIVSWIVIAATMVTIIFVFDPLGGKMAPYPPCIPEHLDSNSSNRLLTGLKTAAKSVWETRVQFCCCCVGQDDNTRVAFSSTADLFSTYFSDTDLVPSDIAAGFTLLHQQQDNISHSREPPEVVTHTPGQPQETELDAEVENCHHYMPFAAAAYGWPLYIYRNPFTGLCRIGGDCCRARDIEYDAVEGDQHNCHFASILKTTGLQYRDFIHISFHDKVYELPFIVVLDHRKESVVVAVRGTMSLQDVLTDLSAESETLELGIELQDCVAHKGIAQAARYIHRRLVNDGILSQAFSVAPEYQLVLVGHSLGAGAAALLAIMLRGAYPQVRAYAFSPPRGLLSKSLYEYSKDFVVSLILGMDVIPRLSVTNMEDLKRRILRVIANCNKPKYKILLHGCWYGLFGGSPDNFPTELDEGTQGALTQPLLGEQTLLTRYSPGYCSSDSPLDSPTKYPTLYPPGRIIHLEEEGGSGRFGCCSAAQYRARWAHEAEFSKILIGPKMLIDHMPDVMIRALDRVLADRTACVSCPGQGGSSVP.

Residues M1 to D17 lie on the Cytoplasmic side of the membrane. The chain crosses the membrane as a helical span at residues L18–T38. The Extracellular segment spans residues L39–Y58. Residues L59–V79 form a helical membrane-spanning segment. The Cytoplasmic segment spans residues S80–L102. A helical membrane pass occupies residues A103–I123. Residues Q124–T128 are Extracellular-facing. A helical membrane pass occupies residues V129–V149. Over T150 to P669 the chain is Cytoplasmic. Residues S443 and D495 each act as charge relay system in the active site. Phosphoserine is present on residues S570, S578, and S582.

Belongs to the AB hydrolase superfamily. Lipase family. The cofactor is Ca(2+). Expressed in liver and immune cells such as macrophages and microglias. In embryonic brains present in axonal tracts, while in adults localizes to dendritic fields, correlating with the developmental change in requirement for 2-AG synthesis from the pre- to the postsynaptic compartment (at protein level).

The protein resides in the cell membrane. It carries out the reaction a 1,2-diacyl-sn-glycerol + H2O = a 2-acylglycerol + a fatty acid + H(+). The catalysed reaction is 1-octadecanoyl-2-(5Z,8Z,11Z,14Z-eicosatetraenoyl)-sn-glycerol + H2O = 2-(5Z,8Z,11Z,14Z-eicosatetraenoyl)-glycerol + octadecanoate + H(+). The enzyme catalyses 1,2-di-(9Z-octadecenoyl)-sn-glycerol + H2O = 2-(9Z-octadecenoyl)-glycerol + (9Z)-octadecenoate + H(+). It catalyses the reaction 1-(9Z-octadecenoyl)-2-(5Z,8Z,11Z,14Z-eicosatetraenoyl)-sn-glycerol + H2O = 2-(5Z,8Z,11Z,14Z-eicosatetraenoyl)-glycerol + (9Z)-octadecenoate + H(+). It carries out the reaction 1-(9Z-octadecenoyl)-2-octadecanoyl-sn-glycerol + H2O = 2-octadecanoylglycerol + (9Z)-octadecenoate + H(+). The catalysed reaction is 1-(9Z-octadecenoyl)-2-(9Z,12Z-octadecadienoyl)-sn-glycerol + H2O = 2-(9Z,12Z-octadecadienoyl)-glycerol + (9Z)-octadecenoate + H(+). The enzyme catalyses 1-(9Z-octadecenoyl)-2-O-(5Z,8Z,11Z,14Z-eicosatetraenyl)-sn-glycerol + H2O = 2-O-(5Z,8Z,11Z,14Z)-eicosatetraenylglycerol + (9Z)-octadecenoate + H(+). It catalyses the reaction a triacylglycerol + H2O = a diacylglycerol + a fatty acid + H(+). It carries out the reaction 1,2,3-tri-(5Z,8Z,11Z,14Z-eicosatetraenoyl)-glycerol + H2O = 1,2-di-(5Z,8Z,11Z,14Z-eicosatetraenoyl)-glycerol + (5Z,8Z,11Z,14Z)-eicosatetraenoate + H(+). The catalysed reaction is 1,2,3-(4Z,7Z,10Z,13Z,16Z,19Z-docosahexaenoyl)-glycerol + H2O = 1,2-di-(4Z,7Z,10Z,13Z,16Z,19Z-docosahexaenoyl)-glycerol + (4Z,7Z,10Z,13Z,16Z,19Z)-docosahexaenoate + H(+). With respect to regulation, inhibited by the 1,2,3-triazole urea covalent inhibitors KT109 and KT172. Inhibited by p-hydroxy-mercuri-benzoate and HgCl(2), but not by PMSF. Also inhibited by RHC80267, a drug that blocks 2-AG formation. Functionally, lipase that catalyzes the hydrolysis of arachidonic acid (AA)-esterified diacylglycerols (DAGs) to produce the principal endocannabinoid, 2-arachidonoylglycerol (2-AG) which can be further cleaved by downstream enzymes to release arachidonic acid (AA) for cyclooxygenase (COX)-mediated eicosanoid production. Preferentially hydrolyzes DAGs at the sn-1 position in a calcium-dependent manner and has negligible activity against other lipids including monoacylglycerols and phospholipids. Plays a key role in the regulation of 2-AG and AA pools utilized by COX1/2 to generate lipid mediators of macrophage and microglia inflammatory responses. Also functions as a polyunsaturated fatty acids-specific triacylglycerol lipase in macrophages. Plays an important role to support the metabolic and signaling demands of macrophages. This is Diacylglycerol lipase-beta (Daglb) from Mus musculus (Mouse).